Reading from the N-terminus, the 480-residue chain is Serine/threonine-protein kinase WAG2 (480 aa).

The Protein kinase domain occupies 88–396 (LKLIRHLGTG…AQDIKRHPFF (309 aa)). ATP contacts are provided by residues 94–102 (LGTGNLGRV) and Lys-117. Asp-213 (proton acceptor) is an active-site residue.

It belongs to the protein kinase superfamily. Ser/Thr protein kinase family. In terms of tissue distribution, expressed in root tips, lateral root primordia and emerging true leaf primordia.

It is found in the cytoplasm. It localises to the cytosol. It carries out the reaction L-seryl-[protein] + ATP = O-phospho-L-seryl-[protein] + ADP + H(+). The catalysed reaction is L-threonyl-[protein] + ATP = O-phospho-L-threonyl-[protein] + ADP + H(+). Functionally, serine/threonine-protein kinase involved in the regulation of auxin signaling. Acts as a positive regulator of cellular auxin efflux and regulates organ development by enhancing PIN-mediated polar auxin transport. Phosphorylates conserved serine residues in the PIN auxin efflux carriers. Phosphorylation of PIN proteins is required and sufficient for apical-basal PIN polarity that enables directional intercellular auxin fluxes, which mediate differential growth, tissue patterning and organogenesis. Acts as a suppressor of root waving. The protein is Serine/threonine-protein kinase WAG2 (WAG2) of Arabidopsis thaliana (Mouse-ear cress).